The primary structure comprises 324 residues: DNA-directed RNA polymerase subunit alpha (324 aa).

The tract at residues 1-228 (MIEFQKPTIR…EHFNLFTDLS (228 aa)) is alpha N-terminal domain (alpha-NTD). The alpha C-terminal domain (alpha-CTD) stretch occupies residues 245–324 (RNKLLDMTIE…STPKEEEEEK (80 aa)).

This sequence belongs to the RNA polymerase alpha chain family. As to quaternary structure, homodimer. The RNAP catalytic core consists of 2 alpha, 1 beta, 1 beta' and 1 omega subunit. When a sigma factor is associated with the core the holoenzyme is formed, which can initiate transcription.

The catalysed reaction is RNA(n) + a ribonucleoside 5'-triphosphate = RNA(n+1) + diphosphate. Functionally, DNA-dependent RNA polymerase catalyzes the transcription of DNA into RNA using the four ribonucleoside triphosphates as substrates. This Caldicellulosiruptor bescii (strain ATCC BAA-1888 / DSM 6725 / KCTC 15123 / Z-1320) (Anaerocellum thermophilum) protein is DNA-directed RNA polymerase subunit alpha.